The following is a 230-amino-acid chain: Cytidylate kinase (230 aa).

Position 12-20 (12-20) interacts with ATP; the sequence is GPSGAGKGT.

Belongs to the cytidylate kinase family. Type 1 subfamily.

It localises to the cytoplasm. The catalysed reaction is CMP + ATP = CDP + ADP. The enzyme catalyses dCMP + ATP = dCDP + ADP. In Yersinia pseudotuberculosis serotype O:1b (strain IP 31758), this protein is Cytidylate kinase.